Consider the following 470-residue polypeptide: Argininosuccinate lyase (470 aa).

The protein belongs to the lyase 1 family. Argininosuccinate lyase subfamily.

Its subcellular location is the cytoplasm. It carries out the reaction 2-(N(omega)-L-arginino)succinate = fumarate + L-arginine. It functions in the pathway amino-acid biosynthesis; L-arginine biosynthesis; L-arginine from L-ornithine and carbamoyl phosphate: step 3/3. This is Argininosuccinate lyase from Leptospira borgpetersenii serovar Hardjo-bovis (strain L550).